The sequence spans 614 residues: UvrABC system protein C (614 aa).

The region spanning 25-103 (SVPGVYKMFG…IKSLKPKYNI (79 aa)) is the GIY-YIG domain. A UVR domain is found at 214 to 249 (KEIQCELFEMMCRFSNNQDYESAIVCRDRLHALKSM).

It belongs to the UvrC family. As to quaternary structure, interacts with UvrB in an incision complex.

It localises to the cytoplasm. Functionally, the UvrABC repair system catalyzes the recognition and processing of DNA lesions. UvrC both incises the 5' and 3' sides of the lesion. The N-terminal half is responsible for the 3' incision and the C-terminal half is responsible for the 5' incision. The chain is UvrABC system protein C from Anaplasma phagocytophilum (strain HZ).